Reading from the N-terminus, the 1342-residue chain is DNA-directed RNA polymerase subunit beta (1342 aa).

It belongs to the RNA polymerase beta chain family. In terms of assembly, the RNAP catalytic core consists of 2 alpha, 1 beta, 1 beta' and 1 omega subunit. When a sigma factor is associated with the core the holoenzyme is formed, which can initiate transcription.

The catalysed reaction is RNA(n) + a ribonucleoside 5'-triphosphate = RNA(n+1) + diphosphate. DNA-dependent RNA polymerase catalyzes the transcription of DNA into RNA using the four ribonucleoside triphosphates as substrates. This is DNA-directed RNA polymerase subunit beta from Cronobacter sakazakii (strain ATCC BAA-894) (Enterobacter sakazakii).